Here is a 473-residue protein sequence, read N- to C-terminus: Cannabinoid receptor 1 (473 aa).

Topologically, residues 1 to 118 (MKSILDGLAD…CFMILNPSQQ (118 aa)) are extracellular. The required for mitochondrial localization stretch occupies residues 2–23 (KSILDGLADTTFRTITTDLLYV). N-linked (GlcNAc...) asparagine glycosylation is found at Asn-79 and Asn-85. Residues 119 to 144 (LAIAVLSLTLGTFTVLENLLVLCVIL) traverse the membrane as a helical segment. The Cytoplasmic segment spans residues 145–156 (HSRSLRCRPSYH). A helical membrane pass occupies residues 157–177 (FIGSLAVADLLGSVIFVYSFV). Over 178–189 (DFHVFHRKDSPN) the chain is Extracellular. A helical membrane pass occupies residues 190–214 (VFLFKLGGVTASFTASVGSLFLTAI). Topologically, residues 215 to 234 (DRYISIHRPLAYKRIVTRPK) are cytoplasmic. The helical transmembrane segment at 235–257 (AVVAFCVMWTIAIVIAVLPLLGW) threads the bilayer. At 258 to 275 (NCKKLNSVCSDIFPLIDE) the chain is on the extracellular side. The chain crosses the membrane as a helical span at residues 276–301 (TYLMFWIGVTSILLLFIVYAYMYILW). The Cytoplasmic portion of the chain corresponds to 302-346 (KAHSHAVRMLQRGTQKSIIIQSTEDGKVQITRPDQTRMDIRLAKT). The helical transmembrane segment at 347 to 367 (LVLILVVLIICWGPLLAIMVY) threads the bilayer. The Extracellular portion of the chain corresponds to 368-379 (DVFGKMNKLIKT). The helical transmembrane segment at 380–401 (IFAFCSMLCLLNSTVNPIIYAL) threads the bilayer. Over 402–473 (RSKDLRHAFR…VSTDTTAEAL (72 aa)) the chain is Cytoplasmic. A lipid anchor (S-palmitoyl cysteine) is attached at Cys-417.

Belongs to the G-protein coupled receptor 1 family. In terms of processing, palmitoylation at Cys-417 is important for recruitment at both plasma membrane and lipid rafts and association with G protein alpha subunits.

It localises to the cell membrane. The protein resides in the mitochondrion outer membrane. Its subcellular location is the cell projection. It is found in the axon. The protein localises to the presynapse. In terms of biological role, G-protein coupled receptor for cannabinoids. Mediates many cannabinoid-induced effects in the central nervous system (CNS), as well as in peripheral tissues. Regulates cellular respiration and energy production in response to cannabinoids. Signaling typically involves reduction in cyclic AMP. This is Cannabinoid receptor 1 (CNR1) from Taeniopygia guttata (Zebra finch).